Here is a 542-residue protein sequence, read N- to C-terminus: Chaperonin GroEL 5 (542 aa).

Residues T30–P33, K51, D87–T91, G415, and D496 contribute to the ATP site.

This sequence belongs to the chaperonin (HSP60) family. Forms a cylinder of 14 subunits composed of two heptameric rings stacked back-to-back. Interacts with the co-chaperonin GroES.

It localises to the cytoplasm. It catalyses the reaction ATP + H2O + a folded polypeptide = ADP + phosphate + an unfolded polypeptide.. Together with its co-chaperonin GroES, plays an essential role in assisting protein folding. The GroEL-GroES system forms a nano-cage that allows encapsulation of the non-native substrate proteins and provides a physical environment optimized to promote and accelerate protein folding. This Rhizobium meliloti (strain 1021) (Ensifer meliloti) protein is Chaperonin GroEL 5.